We begin with the raw amino-acid sequence, 181 residues long: Peptidyl-tRNA hydrolase (181 aa).

Tyr14 contributes to the tRNA binding site. Catalysis depends on His19, which acts as the Proton acceptor. TRNA is bound by residues Tyr62, Asn64, and Asn108.

Belongs to the PTH family. As to quaternary structure, monomer.

It localises to the cytoplasm. The catalysed reaction is an N-acyl-L-alpha-aminoacyl-tRNA + H2O = an N-acyl-L-amino acid + a tRNA + H(+). Its function is as follows. Hydrolyzes ribosome-free peptidyl-tRNAs (with 1 or more amino acids incorporated), which drop off the ribosome during protein synthesis, or as a result of ribosome stalling. In terms of biological role, catalyzes the release of premature peptidyl moieties from peptidyl-tRNA molecules trapped in stalled 50S ribosomal subunits, and thus maintains levels of free tRNAs and 50S ribosomes. This chain is Peptidyl-tRNA hydrolase, found in Campylobacter jejuni subsp. doylei (strain ATCC BAA-1458 / RM4099 / 269.97).